Consider the following 180-residue polypeptide: Calcineurin subunit B type 1 (180 aa).

Gly-2 carries the N-myristoyl glycine lipid modification. 4 EF-hand domains span residues 25 to 60 (AELK…ALNP), 62 to 92 (LERV…LSHK), 94 to 129 (TKED…MVGT), and 135 to 170 (QLQQ…QEGI). 14 residues coordinate Ca(2+): Asp-38, Asp-40, Ser-42, Thr-44, Glu-49, Asp-70, Asn-72, Asp-74, Glu-76, Glu-81, Asp-107, Asp-109, Asp-111, and Glu-118. The canA/calcineurin A binding stretch occupies residues 138–143 (QIVDKT). 5 residues coordinate Ca(2+): Asp-148, Asp-150, Asp-152, Lys-154, and Glu-159.

It belongs to the calcineurin regulatory subunit family. As to quaternary structure, forms a complex composed of a calmodulin-dependent catalytic subunit canA (also known as calcineurin A) and a regulatory Ca(2+)-binding subunit cnbA (also known as calcineurin B).

Its function is as follows. Regulatory subunit of calcineurin, a calcium-dependent, calmodulin stimulated protein phosphatase. Confers calcium sensitivity. Important for stalk formation. In Dictyostelium discoideum (Social amoeba), this protein is Calcineurin subunit B type 1 (cnbA).